Reading from the N-terminus, the 269-residue chain is Phosphatidylglycerol--prolipoprotein diacylglyceryl transferase (269 aa).

The next 7 membrane-spanning stretches (helical) occupy residues 17 to 37 (IGPI…MLGW), 59 to 79 (FLVW…VLFY), 95 to 115 (WQGG…IIAF), 123 to 143 (LFQV…FGRI), 181 to 201 (AGLE…LTGI), 206 to 226 (GALS…SEFF), and 242 to 262 (MGQL…AWAL). Arginine 142 provides a ligand contact to a 1,2-diacyl-sn-glycero-3-phospho-(1'-sn-glycerol).

It belongs to the Lgt family.

It localises to the cell inner membrane. The catalysed reaction is L-cysteinyl-[prolipoprotein] + a 1,2-diacyl-sn-glycero-3-phospho-(1'-sn-glycerol) = an S-1,2-diacyl-sn-glyceryl-L-cysteinyl-[prolipoprotein] + sn-glycerol 1-phosphate + H(+). The protein operates within protein modification; lipoprotein biosynthesis (diacylglyceryl transfer). In terms of biological role, catalyzes the transfer of the diacylglyceryl group from phosphatidylglycerol to the sulfhydryl group of the N-terminal cysteine of a prolipoprotein, the first step in the formation of mature lipoproteins. This chain is Phosphatidylglycerol--prolipoprotein diacylglyceryl transferase, found in Paramagnetospirillum magneticum (strain ATCC 700264 / AMB-1) (Magnetospirillum magneticum).